The following is a 342-amino-acid chain: Anthranilate phosphoribosyltransferase (342 aa).

5-phospho-alpha-D-ribose 1-diphosphate is bound by residues Gly81, 84–85, Thr89, 91–94, 109–117, and Thr121; these read GD, NIST, and KHGNRALSS. Gly81 contacts anthranilate. Ser93 contributes to the Mg(2+) binding site. Residue Asn112 participates in anthranilate binding. Position 167 (Arg167) interacts with anthranilate. Asp225 and Glu226 together coordinate Mg(2+).

This sequence belongs to the anthranilate phosphoribosyltransferase family. As to quaternary structure, homodimer. The cofactor is Mg(2+).

The catalysed reaction is N-(5-phospho-beta-D-ribosyl)anthranilate + diphosphate = 5-phospho-alpha-D-ribose 1-diphosphate + anthranilate. Its pathway is amino-acid biosynthesis; L-tryptophan biosynthesis; L-tryptophan from chorismate: step 2/5. Its function is as follows. Catalyzes the transfer of the phosphoribosyl group of 5-phosphorylribose-1-pyrophosphate (PRPP) to anthranilate to yield N-(5'-phosphoribosyl)-anthranilate (PRA). The sequence is that of Anthranilate phosphoribosyltransferase from Agrobacterium fabrum (strain C58 / ATCC 33970) (Agrobacterium tumefaciens (strain C58)).